Consider the following 1156-residue polypeptide: Cartilage intermediate layer protein 2 (1156 aa).

The first 20 residues, 1-20 (MASLLPLLCLCVVAAHLAGA), serve as a signal peptide directing secretion. In terms of domain architecture, TSP type-1 spans 146-197 (EASWGAWGPWGPCSGSCGPGRRLRRRHCPSPAGDACPGRPLEAQKCVRPRCP). 3 disulfides stabilise this stretch: Cys158-Cys191, Cys162-Cys196, and Cys173-Cys181. Residues Asn276, Asn308, and Asn329 are each glycosylated (N-linked (GlcNAc...) asparagine). The 85-residue stretch at 292–376 (PYLVKHPESR…AVRSGTARLT (85 aa)) folds into the Ig-like C2-type domain. An intrachain disulfide couples Cys313 to Cys359. The disordered stretch occupies residues 1134 to 1156 (SEAAQAQARASGPLRTRRGRVRQ).

In terms of processing, may be cleaved into 2 chains possibly by a furin-like protease upon or preceding secretion. In terms of tissue distribution, expressed in articular chondrocytes but not in knee meniscal cartilage cells. Localizes to the intermediate to deep zone of articular cartilage.

Its subcellular location is the secreted. The protein resides in the extracellular space. The protein localises to the extracellular matrix. May play a role in cartilage scaffolding. In Homo sapiens (Human), this protein is Cartilage intermediate layer protein 2 (CILP2).